The primary structure comprises 484 residues: Zinc metalloproteinase/disintegrin PMMP-2 (484 aa).

The N-terminal stretch at 1-20 (MIQVLLVTICLAVFPYQGSS) is a signal peptide. Positions 21-190 (IILESGNVDD…KASQLNLTPL (170 aa)) are excised as a propeptide. Residues 197–395 (RYVKLAIVVD…YNPQCILNAP (199 aa)) enclose the Peptidase M12B domain. N239 carries an N-linked (GlcNAc...) asparagine glycan. 3 disulfides stabilise this stretch: C308–C390, C352–C374, and C354–C357. Position 333 (H333) interacts with Zn(2+). E334 is a catalytic residue. 2 residues coordinate Zn(2+): H337 and H343. A propeptide spanning residues 396-413 (LRTDTVSTPVSGNEFLEA) is cleaved from the precursor. The 82-residue stretch at 403–484 (TPVSGNEFLE…ADCPRNGLYG (82 aa)) folds into the Disintegrin domain. 6 cysteine pairs are disulfide-bonded: C417-C432, C419-C427, C426-C449, C440-C446, C445-C470, and C458-C477. The Cell attachment site motif lies at 462 to 464 (RGD).

It belongs to the venom metalloproteinase (M12B) family. P-II subfamily. P-IIa sub-subfamily. Monomer. Zn(2+) serves as cofactor. In terms of tissue distribution, expressed by the venom gland.

It localises to the secreted. Impairs hemostasis in the envenomed animal. Its function is as follows. Inhibits platelet aggregation induced by ADP, thrombin, platelet-activating factor and collagen. Acts by inhibiting fibrinogen interaction with platelet receptors GPIIb/GPIIIa (ITGA2B/ITGB3). The chain is Zinc metalloproteinase/disintegrin PMMP-2 from Protobothrops mucrosquamatus (Taiwan habu).